We begin with the raw amino-acid sequence, 1203 residues long: DNA-directed RNA polymerase subunit beta' (1203 aa).

4 residues coordinate Zn(2+): Cys60, Cys62, Cys75, and Cys78. Mg(2+) contacts are provided by Asp449, Asp451, and Asp453. Positions 818, 892, 899, and 902 each coordinate Zn(2+).

The protein belongs to the RNA polymerase beta' chain family. The RNAP catalytic core consists of 2 alpha, 1 beta, 1 beta' and 1 omega subunit. When a sigma factor is associated with the core the holoenzyme is formed, which can initiate transcription. The cofactor is Mg(2+). Zn(2+) serves as cofactor.

The enzyme catalyses RNA(n) + a ribonucleoside 5'-triphosphate = RNA(n+1) + diphosphate. Functionally, DNA-dependent RNA polymerase catalyzes the transcription of DNA into RNA using the four ribonucleoside triphosphates as substrates. The sequence is that of DNA-directed RNA polymerase subunit beta' from Bacillus anthracis.